Consider the following 796-residue polypeptide: Bud site selection protein 27 (796 aa).

Residues 81–121 adopt a coiled-coil conformation; it reads KEEAITFVDDKLKLMEDAIEQFNLKIEEAKKTLDNLNHMED. A compositionally biased stretch (polar residues) spans 152-168; that stretch reads VISSSVTPTTKQPSQSN. 5 disordered regions span residues 152 to 197, 300 to 344, 421 to 458, 535 to 624, and 752 to 796; these read VISS…EENL, LRAQ…QVGF, EGEA…TTRS, EKEP…AKTG, and ATAS…DSKP. 2 stretches are compositionally biased toward basic and acidic residues: residues 169 to 197 and 306 to 318; these read SKKE…EENL and SQDH…DVNK. The segment covering 427–441 has biased composition (basic residues); it reads SNRRTRVSRFRKDRA. Positions 535-550 are enriched in basic and acidic residues; sequence EKEPEINSKSEFETPF. Positions 551 to 568 are enriched in basic residues; that stretch reads KKKKLKSLQKPRSSKSMK. The span at 579-589 shows a compositional bias: acidic residues; sequence ISDDDYDDDDD. S580 carries the post-translational modification Phosphoserine. Residues 601–610 show a composition bias toward basic and acidic residues; sequence NNTDEQDKFP.

Belongs to the prefoldin subunit alpha family.

It is found in the cytoplasm. Its function is as follows. Involved in gene expression controlled by TOR kinase and nutrient signaling. May also be involved in positioning the proximal bud pole signal. The chain is Bud site selection protein 27 (BUD27) from Saccharomyces cerevisiae (strain ATCC 204508 / S288c) (Baker's yeast).